The sequence spans 688 residues: Translation initiation factor IF-2 (688 aa).

Basic and acidic residues-rich tracts occupy residues 53-62 (GKEKSEKTKE) and 86-95 (KRDDKNEKVN). The interval 53 to 100 (GKEKSEKTKEEDDEIETTAKNPIKESMNNKKSNKRDDKNEKVNTENAE) is disordered. In terms of domain architecture, tr-type G spans 187-354 (KRSPIITVMG…MILLSSEILE (168 aa)). Positions 196–203 (GHVDHGKT) are G1. 196–203 (GHVDHGKT) is a binding site for GTP. A G2 region spans residues 221–225 (GITQH). Residues 242–245 (DTPG) are G3. Residues 242 to 246 (DTPGH) and 296 to 299 (NKID) contribute to the GTP site. A G4 region spans residues 296-299 (NKID). The interval 332 to 334 (SAH) is G5.

Belongs to the TRAFAC class translation factor GTPase superfamily. Classic translation factor GTPase family. IF-2 subfamily.

The protein resides in the cytoplasm. One of the essential components for the initiation of protein synthesis. Protects formylmethionyl-tRNA from spontaneous hydrolysis and promotes its binding to the 30S ribosomal subunits. Also involved in the hydrolysis of GTP during the formation of the 70S ribosomal complex. This is Translation initiation factor IF-2 from Clostridium botulinum (strain ATCC 19397 / Type A).